The primary structure comprises 132 residues: Phosphoribosyl-AMP cyclohydrolase (132 aa).

Mg(2+) is bound at residue Asp86. Cys87 contributes to the Zn(2+) binding site. Mg(2+) contacts are provided by Asp88 and Asp90. Zn(2+)-binding residues include Cys103 and Cys110.

This sequence belongs to the PRA-CH family. As to quaternary structure, homodimer. The cofactor is Mg(2+). It depends on Zn(2+) as a cofactor.

It is found in the cytoplasm. The enzyme catalyses 1-(5-phospho-beta-D-ribosyl)-5'-AMP + H2O = 1-(5-phospho-beta-D-ribosyl)-5-[(5-phospho-beta-D-ribosylamino)methylideneamino]imidazole-4-carboxamide. It functions in the pathway amino-acid biosynthesis; L-histidine biosynthesis; L-histidine from 5-phospho-alpha-D-ribose 1-diphosphate: step 3/9. Its function is as follows. Catalyzes the hydrolysis of the adenine ring of phosphoribosyl-AMP. The chain is Phosphoribosyl-AMP cyclohydrolase from Haloquadratum walsbyi (strain DSM 16790 / HBSQ001).